Consider the following 310-residue polypeptide: RING-H2 finger protein ATL60 (310 aa).

A helical membrane pass occupies residues 24 to 44 (VLLFSIVSIFTGILFLLLLHL). Residues 120–162 (CAVCLSDLVDGDKARVLPRCNHGFHVDCIDMWFQSHSTCPLCR) form an RING-type; atypical zinc finger. Disordered regions lie at residues 170 to 201 (DTTH…QDQS) and 240 to 260 (GNFA…RSQE). Polar residues predominate over residues 179 to 201 (LPQNQNFESGHSTNQHNPSQDQS).

Belongs to the RING-type zinc finger family. ATL subfamily.

The protein localises to the membrane. It carries out the reaction S-ubiquitinyl-[E2 ubiquitin-conjugating enzyme]-L-cysteine + [acceptor protein]-L-lysine = [E2 ubiquitin-conjugating enzyme]-L-cysteine + N(6)-ubiquitinyl-[acceptor protein]-L-lysine.. The protein operates within protein modification; protein ubiquitination. The polypeptide is RING-H2 finger protein ATL60 (ATL60) (Arabidopsis thaliana (Mouse-ear cress)).